A 478-amino-acid chain; its full sequence is tRNA (guanine(10)-N(2))-methyltransferase TRMT11 (478 aa).

The tract at residues 457-478 is disordered; it reads EERARSEMANAENVKSKGKEDV.

The protein belongs to the class I-like SAM-binding methyltransferase superfamily. TRM11 methyltransferase family. Part of the heterodimeric TRMT11-TRM112 methyltransferase complex; this complex forms an active tRNA methyltransferase, where TRMT112 acts as an activator of the catalytic subunit TRMT11.

It localises to the cytoplasm. It catalyses the reaction guanosine(10) in tRNA + S-adenosyl-L-methionine = N(2)-methylguanosine(10) in tRNA + S-adenosyl-L-homocysteine + H(+). Its function is as follows. Catalytic subunit of the TRMT11-TRM112 methyltransferase complex, that specifically mediates the S-adenosyl-L-methionine-dependent N(2)-methylation of guanosine nucleotide at position 10 (m2G10) in tRNAs. This is one of the major tRNA (guanine-N(2))-methyltransferases. The sequence is that of tRNA (guanine(10)-N(2))-methyltransferase TRMT11 (trmt11.L) from Xenopus laevis (African clawed frog).